The sequence spans 344 residues: Phenylalanine--tRNA ligase alpha subunit (344 aa).

Residue Glu-256 coordinates Mg(2+).

This sequence belongs to the class-II aminoacyl-tRNA synthetase family. Phe-tRNA synthetase alpha subunit type 1 subfamily. As to quaternary structure, tetramer of two alpha and two beta subunits. Mg(2+) serves as cofactor.

Its subcellular location is the cytoplasm. The enzyme catalyses tRNA(Phe) + L-phenylalanine + ATP = L-phenylalanyl-tRNA(Phe) + AMP + diphosphate + H(+). The polypeptide is Phenylalanine--tRNA ligase alpha subunit (pheS) (Bacillus subtilis (strain 168)).